The chain runs to 234 residues: Thiamine-phosphate synthase (234 aa).

4-amino-2-methyl-5-(diphosphooxymethyl)pyrimidine contacts are provided by residues 65–69 and Asn-97; that span reads QYRNK. Residues Asp-98 and Asp-117 each contribute to the Mg(2+) site. Position 136 (Ser-136) interacts with 4-amino-2-methyl-5-(diphosphooxymethyl)pyrimidine. 163–165 serves as a coordination point for 2-[(2R,5Z)-2-carboxy-4-methylthiazol-5(2H)-ylidene]ethyl phosphate; it reads SHT. Lys-166 contacts 4-amino-2-methyl-5-(diphosphooxymethyl)pyrimidine. Residues Gly-192 and 212–213 contribute to the 2-[(2R,5Z)-2-carboxy-4-methylthiazol-5(2H)-ylidene]ethyl phosphate site; that span reads IS.

This sequence belongs to the thiamine-phosphate synthase family. Mg(2+) is required as a cofactor.

The catalysed reaction is 2-[(2R,5Z)-2-carboxy-4-methylthiazol-5(2H)-ylidene]ethyl phosphate + 4-amino-2-methyl-5-(diphosphooxymethyl)pyrimidine + 2 H(+) = thiamine phosphate + CO2 + diphosphate. It carries out the reaction 2-(2-carboxy-4-methylthiazol-5-yl)ethyl phosphate + 4-amino-2-methyl-5-(diphosphooxymethyl)pyrimidine + 2 H(+) = thiamine phosphate + CO2 + diphosphate. The enzyme catalyses 4-methyl-5-(2-phosphooxyethyl)-thiazole + 4-amino-2-methyl-5-(diphosphooxymethyl)pyrimidine + H(+) = thiamine phosphate + diphosphate. The protein operates within cofactor biosynthesis; thiamine diphosphate biosynthesis; thiamine phosphate from 4-amino-2-methyl-5-diphosphomethylpyrimidine and 4-methyl-5-(2-phosphoethyl)-thiazole: step 1/1. Functionally, condenses 4-methyl-5-(beta-hydroxyethyl)thiazole monophosphate (THZ-P) and 2-methyl-4-amino-5-hydroxymethyl pyrimidine pyrophosphate (HMP-PP) to form thiamine monophosphate (TMP). This Xylella fastidiosa (strain 9a5c) protein is Thiamine-phosphate synthase.